Consider the following 82-residue polypeptide: Large ribosomal subunit protein bL31B (82 aa).

It belongs to the bacterial ribosomal protein bL31 family. Type B subfamily. In terms of assembly, part of the 50S ribosomal subunit.

The polypeptide is Large ribosomal subunit protein bL31B (Proteus mirabilis (strain HI4320)).